A 160-amino-acid polypeptide reads, in one-letter code: Iron-sulfur assembly protein IscA1 (160 aa).

It belongs to the HesB/IscA family. In terms of assembly, tetramer.

It localises to the mitochondrion. The protein operates within cofactor biosynthesis; iron-sulfur cluster biosynthesis. Its function is as follows. Participates in iron-sulfur cluster formation (ISC) pathway for iron-sulfur (Fe-S) cluster biogenesis. Can bind iron and [4Fe-4S] clusters. May function as an iron chaperone. The chain is Iron-sulfur assembly protein IscA1 from Plasmodium falciparum (isolate 3D7).